Reading from the N-terminus, the 220-residue chain is UPF0758 protein APL_1970 (220 aa).

The MPN domain maps to 98-220 (NINEPYLAVM…YFSFEEEKFR (123 aa)). 3 residues coordinate Zn(2+): histidine 169, histidine 171, and aspartate 182. Residues 169 to 182 (HNHPSGNCTPSESD) carry the JAMM motif motif.

Belongs to the UPF0758 family.

In Actinobacillus pleuropneumoniae serotype 5b (strain L20), this protein is UPF0758 protein APL_1970.